Consider the following 329-residue polypeptide: Probable ABC transporter permease protein MG188 homolog (329 aa).

6 helical membrane-spanning segments follow: residues 30-50 (FLLF…PFFL), 96-116 (IISL…IVFV), 128-148 (VFFL…IYIL), 176-196 (ALWG…VLVI), 234-254 (LIFL…ISLF), and 283-303 (NFAG…GLVL). Residues 88–303 (LRNSFLYSII…ILGVCYGLVL (216 aa)) form the ABC transmembrane type-1 domain.

The protein belongs to the binding-protein-dependent transport system permease family. MalFG subfamily.

It localises to the cell membrane. Functionally, probably part of a binding-protein-dependent transport system. Probably responsible for the translocation of the substrate across the membrane. The protein is Probable ABC transporter permease protein MG188 homolog of Mycoplasma pneumoniae (strain ATCC 29342 / M129 / Subtype 1) (Mycoplasmoides pneumoniae).